We begin with the raw amino-acid sequence, 518 residues long: MGYDQTRKLSDEYEISEILGRGGFSVVRKGTKKSGNEKTQVAIKTLRRLGSSPSGTGGGQKSTATVMGFPSLRQVSVSDALLTNEILVMRRIVENVSPHPNVIDLYDVCEDSNGVHLVLELCSGGELFDRIVAQDKYAETEAAAVVRQIAAGLEAVHKADIVHRDLKPENCLFLDSRKDSPLKIMDFGLSSVEEFTDPVVGLFGSIDYVSPEALSQGKITAKSDMWSLGVILYILLSGYPPFIAQNNRQKQQMIINGNFSFYEKTWKGITQSAKQLISSLLTVDPSKRPSAQELLSHPWVRGDKAKDEQMDPEIVSRLQSFNARRKLRAAAIASVWSSTIFLRTKKLRSLVGTYDLKEEEIESLRIHFKKICGNGDNATLSEFVEVLKAMKMPSLIPLAPRIFDLFDNNRDGTIDMREILCGFSSLKNSKGDDALRLCFQMYDTDRSGCITKEEVASMLCALPEECLPADITEPGKLDEIFDLMDANSDGKVTFEEFKAAMQRDSSLQDMLLSSLRPS.

The Protein kinase domain occupies 13-300 (YEISEILGRG…AQELLSHPWV (288 aa)). Residues 19–27 (LGRGGFSVV) and K44 each bind ATP. Catalysis depends on D165, which acts as the Proton acceptor. Residue T265 is modified to Phosphothreonine. The calmodulin-binding stretch occupies residues 323-336 (ARRKLRAAAIASVW). Residues 344–365 (TKKLRSLVGTYDLKEEEIESLR) adopt a coiled-coil conformation. EF-hand domains lie at 394–429 (SLIP…LKNS), 430–465 (KGDD…LPEE), and 472–507 (TEPG…DSSL). Residues D407, N409, D411, T413, E418, D443, D445, S447, C449, E454, D485, N487, D489, K491, and E496 each coordinate Ca(2+).

The protein belongs to the protein kinase superfamily. CAMK Ser/Thr protein kinase family. CaMK subfamily. Interacts with IPD3. Interacts with CIP73. In terms of processing, autophosphorylation stimulated by calcium. Occurs probably by an intermolecular mechanism. As to expression, mainly expressed in roots and nodules. Detected in leaves, stems and cotyledons.

It is found in the nucleus. It carries out the reaction L-seryl-[protein] + ATP = O-phospho-L-seryl-[protein] + ADP + H(+). The enzyme catalyses L-threonyl-[protein] + ATP = O-phospho-L-threonyl-[protein] + ADP + H(+). Activated by calcium/calmodulin binding after calcium-induced autophosphorylation. Functionally, calcium- and calmodulin-dependent protein kinase necessary and sufficient for dedifferentiation of root cortical cells into nodule initials. Not required for calcium spiking. Acts as central regulator of the nodule organogenesis program. Required for root hair curling and infection thread (IT) formation upon rhizobial infection, and arbuscule formation during arbuscular mycorrhiza (AM) fungal infection. Phosphorylates the downstream target IPD3, a protein required for root infection by symbiotic rhizobia and AM fungi. Phosphorylates the downstream target CIP73, a protein required for root nodule organogenesis. Mediates the phosphorylation of leghemoglobins (e.g. LB1) to modulate their oxygen O(2) affinity, thus regulating the diffusion of oxygen to the bacteroids in nodules. In Lotus japonicus (Lotus corniculatus var. japonicus), this protein is Calcium and calcium/calmodulin-dependent serine/threonine-protein kinase.